A 494-amino-acid polypeptide reads, in one-letter code: Aspartyl/glutamyl-tRNA(Asn/Gln) amidotransferase subunit B (494 aa).

This sequence belongs to the GatB/GatE family. GatB subfamily. As to quaternary structure, heterotrimer of A, B and C subunits.

The catalysed reaction is L-glutamyl-tRNA(Gln) + L-glutamine + ATP + H2O = L-glutaminyl-tRNA(Gln) + L-glutamate + ADP + phosphate + H(+). The enzyme catalyses L-aspartyl-tRNA(Asn) + L-glutamine + ATP + H2O = L-asparaginyl-tRNA(Asn) + L-glutamate + ADP + phosphate + 2 H(+). Functionally, allows the formation of correctly charged Asn-tRNA(Asn) or Gln-tRNA(Gln) through the transamidation of misacylated Asp-tRNA(Asn) or Glu-tRNA(Gln) in organisms which lack either or both of asparaginyl-tRNA or glutaminyl-tRNA synthetases. The reaction takes place in the presence of glutamine and ATP through an activated phospho-Asp-tRNA(Asn) or phospho-Glu-tRNA(Gln). This is Aspartyl/glutamyl-tRNA(Asn/Gln) amidotransferase subunit B from Nitrobacter winogradskyi (strain ATCC 25391 / DSM 10237 / CIP 104748 / NCIMB 11846 / Nb-255).